The following is a 132-amino-acid chain: NADPH-dependent 7-cyano-7-deazaguanine reductase (132 aa).

The active-site Thioimide intermediate is the C48. D55 (proton donor) is an active-site residue. Substrate contacts are provided by residues 70-72 (LEL) and 89-90 (ME).

Belongs to the GTP cyclohydrolase I family. QueF type 1 subfamily.

Its subcellular location is the cytoplasm. It catalyses the reaction 7-aminomethyl-7-carbaguanine + 2 NADP(+) = 7-cyano-7-deazaguanine + 2 NADPH + 3 H(+). It functions in the pathway tRNA modification; tRNA-queuosine biosynthesis. Its function is as follows. Catalyzes the NADPH-dependent reduction of 7-cyano-7-deazaguanine (preQ0) to 7-aminomethyl-7-deazaguanine (preQ1). This is NADPH-dependent 7-cyano-7-deazaguanine reductase from Elusimicrobium minutum (strain Pei191).